A 511-amino-acid chain; its full sequence is ATP synthase subunit alpha (511 aa).

169–176 contributes to the ATP binding site; sequence GDRKTGKT.

This sequence belongs to the ATPase alpha/beta chains family. In terms of assembly, F-type ATPases have 2 components, CF(1) - the catalytic core - and CF(0) - the membrane proton channel. CF(1) has five subunits: alpha(3), beta(3), gamma(1), delta(1), epsilon(1). CF(0) has three main subunits: a(1), b(2) and c(9-12). The alpha and beta chains form an alternating ring which encloses part of the gamma chain. CF(1) is attached to CF(0) by a central stalk formed by the gamma and epsilon chains, while a peripheral stalk is formed by the delta and b chains.

The protein localises to the cell membrane. It catalyses the reaction ATP + H2O + 4 H(+)(in) = ADP + phosphate + 5 H(+)(out). Its function is as follows. Produces ATP from ADP in the presence of a proton gradient across the membrane. The alpha chain is a regulatory subunit. The protein is ATP synthase subunit alpha of Latilactobacillus sakei subsp. sakei (strain 23K) (Lactobacillus sakei subsp. sakei).